The sequence spans 97 residues: Large ribosomal subunit protein uL23 (97 aa).

Belongs to the universal ribosomal protein uL23 family. Part of the 50S ribosomal subunit. Contacts protein L29, and trigger factor when it is bound to the ribosome.

Its function is as follows. One of the early assembly proteins it binds 23S rRNA. One of the proteins that surrounds the polypeptide exit tunnel on the outside of the ribosome. Forms the main docking site for trigger factor binding to the ribosome. The polypeptide is Large ribosomal subunit protein uL23 (Bartonella henselae (strain ATCC 49882 / DSM 28221 / CCUG 30454 / Houston 1) (Rochalimaea henselae)).